The sequence spans 370 residues: uncharacterized protein (370 aa).

The next 10 membrane-spanning stretches (helical) occupy residues 6–26, 49–69, 79–99, 111–131, 143–163, 167–187, 206–226, 236–256, 307–327, and 333–353; these read AVVF…CLGN, IGIV…VAPF, SFAN…GEMA, FLGT…LGII, ILIG…CAGF, MIGK…FGLW, MVAI…IVLI, IQTT…TAFI, VAFA…VAGM, and AAMI…AAWM.

It belongs to the EutH family.

The protein localises to the cell membrane. This is an uncharacterized protein from Bacillus subtilis (strain 168).